Reading from the N-terminus, the 833-residue chain is Ventricular zone-expressed PH domain-containing protein homolog 1 (833 aa).

Positions threonine 201–methionine 319 are interaction with TGFBR1. The segment at lysine 458–glutamate 505 is disordered. Basic and acidic residues predominate over residues leucine 492–glutamine 502. Residues glutamate 663–leucine 833 form an interaction with TGFBR1 region. The region spanning glutamine 716–alanine 819 is the PH domain.

Belongs to the MELT/VEPH family. Interacts with TGFBR1.

It is found in the cell membrane. In terms of biological role, interacts with TGF-beta receptor type-1 (TGFBR1) and inhibits dissociation of activated SMAD2 from TGFBR1, impeding its nuclear accumulation and resulting in impaired TGF-beta signaling. May also affect FOXO, Hippo and Wnt signaling. In Homo sapiens (Human), this protein is Ventricular zone-expressed PH domain-containing protein homolog 1 (VEPH1).